Consider the following 186-residue polypeptide: Large ribosomal subunit protein uL16 (186 aa).

It belongs to the universal ribosomal protein uL16 family.

The protein is Large ribosomal subunit protein uL16 of Nanoarchaeum equitans (strain Kin4-M).